We begin with the raw amino-acid sequence, 317 residues long: L-lactate dehydrogenase (317 aa).

NAD(+)-binding positions include V17, D38, K43, Y69, and 83-84; that span reads GA. Q86 and R92 together coordinate substrate. NAD(+) is bound by residues S105, 122 to 124, and S147; that span reads ATN. 124–127 contributes to the substrate binding site; the sequence is NPVD. A substrate-binding site is contributed by 152 to 155; it reads DSAR. 2 residues coordinate beta-D-fructose 1,6-bisphosphate: R157 and H172. The active-site Proton acceptor is the H179. Y224 is modified (phosphotyrosine). T233 contributes to the substrate binding site.

This sequence belongs to the LDH/MDH superfamily. LDH family. As to quaternary structure, homotetramer.

It is found in the cytoplasm. It carries out the reaction (S)-lactate + NAD(+) = pyruvate + NADH + H(+). It participates in fermentation; pyruvate fermentation to lactate; (S)-lactate from pyruvate: step 1/1. Its activity is regulated as follows. Allosterically activated by fructose 1,6-bisphosphate (FBP). In terms of biological role, catalyzes the conversion of lactate to pyruvate. The protein is L-lactate dehydrogenase of Bacillus velezensis (strain DSM 23117 / BGSC 10A6 / LMG 26770 / FZB42) (Bacillus amyloliquefaciens subsp. plantarum).